The sequence spans 1096 residues: MGSEDHGAQNPSCKIMTFRPTMEEFKDFNKYVAYIESQGAHRAGLAKIIPPKEWKPRQTYDDIDDVVIPAPIQQVVTGQSGLFTQYNIQKKAMTVGEYRRLANSEKYCTPRHQDFDDLERKYWKNLTFVSPIYGADISGSLYDDDVAQWNIGSLRTILDMVERECGTIIEGVNTPYLYFGMWKTTFAWHTEDMDLYSINYLHFGEPKSWYAIPPEHGKRLERLAIGFFPGSSQGCDAFLRHKMTLISPIILKKYGIPFSRITQEAGEFMITFPYGYHAGFNHGFNCAESTNFATLRWIDYGKVATQCTCRKDMVKISMDVFVRILQPERYELWKQGKDLTVLDHTRPTALTSPELSSWSASRASLKAKLLRRSHRKRSQPKKPKPEDPKFPGEGTAGAALLEEAGGSVKEEAGPEVDPEEEEEEPQPLPHGREAEGAEEDGRGKLRPTKAKSERKKKSFGLLPPQLPPPPAHFPSEEALWLPSPLEPPVLGPGPAAMEESPLPAPLNVVPPEVPSEELEAKPRPIIPMLYVVPRPGKAAFNQEHVSCQQAFEHFAQKGPTWKEPVSPMELTGPEDGAASSGAGRMETKARAGEGQAPSTFSKLKMEIKKSRRHPLGRPPTRSPLSVVKQEASSDEEASPFSGEEDVSDPDALRPLLSLQWKNRAASFQAERKFNAAAARTEPYCAICTLFYPYCQALQTEKEAPIASLGKGCPATLPSKSRQKTRPLIPEMCFTSGGENTEPLPANSYIGDDGTSPLIACGKCCLQVHASCYGIRPELVNEGWTCSRCAAHAWTAECCLCNLRGGALQMTTDRRWIHVICAIAVPEARFLNVIERHPVDISAIPEQRWKLKCVYCRKRMKKVSGACIQCSYEHCSTSFHVTCAHAAGVLMEPDDWPYVVSITCLKHKSGGHAVQLLRAVSLGQVVITKNRNGLYYRCRVIGAASQTCYEVNFDDGSYSDNLYPESITSRDCVQLGPPSEGELVELRWTDGNLYKAKFISSVTSHIYQVEFEDGSQLTVKRGDIFTLEEELPKRVRSRLSLSTGAPQEPAFSGEEAKAAKRPRVGTPLATEDSGRSQDYVAFVESLLQVQGRPGAPF.

Residues 15-57 (IMTFRPTMEEFKDFNKYVAYIESQGAHRAGLAKIIPPKEWKPR) enclose the JmjN domain. Y133 is a binding site for 2-oxoglutarate. The region spanning 146–309 (VAQWNIGSLR…YGKVATQCTC (164 aa)) is the JmjC domain. Residues H189 and E191 each contribute to the Fe cation site. N199 and K207 together coordinate 2-oxoglutarate. 2 residues coordinate Zn(2+): C235 and H241. K242 contacts 2-oxoglutarate. Residue H277 coordinates Fe cation. Zn(2+) is bound by residues C307 and C309. The segment covering 369 to 382 (LLRRSHRKRSQPKK) has biased composition (basic residues). 2 disordered regions span residues 369–478 (LLRR…SEEA) and 557–649 (KGPT…VSDP). Low complexity predominate over residues 391–406 (PGEGTAGAALLEEAGG). Residues 413–425 (GPEVDPEEEEEEP) are compositionally biased toward acidic residues. Positions 430–443 (HGREAEGAEEDGRG) are enriched in basic and acidic residues. The segment covering 444-458 (KLRPTKAKSERKKKS) has biased composition (basic residues). S566 is subject to Phosphoserine. K602 carries the post-translational modification N6-acetyllysine. Residues 632–648 (SSDEEASPFSGEEDVSD) show a composition bias toward acidic residues. A PHD-type 1 zinc finger spans residues 731–789 (MCFTSGGENTEPLPANSYIGDDGTSPLIACGKCCLQVHASCYGIRPELVNEGWTCSRCA). Residues 794–827 (TAECCLCNLRGGALQMTTDRRWIHVICAIAVPEA) form a C2HC pre-PHD-type zinc finger. The segment at 850 to 907 (LKCVYCRKRMKKVSGACIQCSYEHCSTSFHVTCAHAAGVLMEPDDWPYVVSITCLKHK) adopts a PHD-type 2 zinc-finger fold. 2 Tudor domains span residues 917-974 (RAVS…CVQL) and 975-1031 (GPPS…EELP). A disordered region spans residues 1037-1073 (RLSLSTGAPQEPAFSGEEAKAAKRPRVGTPLATEDSG). Residue T1065 is modified to Phosphothreonine.

Belongs to the JHDM3 histone demethylase family. Fe(2+) is required as a cofactor.

The protein localises to the nucleus. It catalyses the reaction N(6),N(6),N(6)-trimethyl-L-lysyl(9)-[histone H3] + 2 2-oxoglutarate + 2 O2 = N(6)-methyl-L-lysyl(9)-[histone H3] + 2 formaldehyde + 2 succinate + 2 CO2. In terms of biological role, histone demethylase that specifically demethylates 'Lys-9' of histone H3, thereby playing a role in histone code. Does not demethylate histone H3 'Lys-4', H3 'Lys-27', H3 'Lys-36' nor H4 'Lys-20'. Only able to demethylate trimethylated H3 'Lys-9', with a weaker activity than KDM4A, KDM4C and KDM4D. Demethylation of Lys residue generates formaldehyde and succinate. Plays a critical role in the development of the central nervous system (CNS). The polypeptide is Lysine-specific demethylase 4B (KDM4B) (Homo sapiens (Human)).